We begin with the raw amino-acid sequence, 1111 residues long: Receptor-type guanylate cyclase gcy-7 (1111 aa).

The signal sequence occupies residues 1 to 24 (MKPFYSMSLVLFLVITLLPKPMFP). Residues 25–488 (QVATGTTGNV…CPKSFVDEYL (464 aa)) are Extracellular-facing. N-linked (GlcNAc...) asparagine glycosylation is found at Asn-80, Asn-300, Asn-326, Asn-353, Asn-389, Asn-407, Asn-430, and Asn-441. A helical membrane pass occupies residues 489–509 (IWVIVAIVVLFLAITAAACGI). Residues 510 to 1111 (YFSIQARRQE…TLKSDEQLSD (602 aa)) lie on the Cytoplasmic side of the membrane. Residues 536–838 (QINSKQKGKG…NDNLMDHVFN (303 aa)) form the Protein kinase domain. ATP is bound by residues 542–550 (KGKGEHSVR) and Lys-568. The Guanylate cyclase domain occupies 896–1026 (TIFFSDVVQF…DAVNTASRME (131 aa)).

It belongs to the adenylyl cyclase class-4/guanylyl cyclase family. In terms of tissue distribution, expressed asymmetrically in ASE left (ASEL) sensory neuron. Expressed in excretory canal cell.

It is found in the cell membrane. The enzyme catalyses GTP = 3',5'-cyclic GMP + diphosphate. In terms of biological role, guanylate cyclase involved in the production of the second messenger cGMP. Unlike other guanylate cyclases expressed in ASE neurons, may not play a role in chemotaxis responses toward salt ions in ASEL (ASE left) sensory neurons. The chain is Receptor-type guanylate cyclase gcy-7 from Caenorhabditis elegans.